The chain runs to 691 residues: Competence protein ComA (691 aa).

6 helical membrane-spanning segments follow: residues 183–203, 220–240, 280–300, 322–342, 347–367, and 396–416; these read HLVSISGLHVTMVAVLFAWLA, WVLAAGCAGALFYALLAGFSV, LAVLGVGTWLSFGLVAALIWA, VLSLVLLGYLFASLPLVSPLV, IPWFSWVLTPLALLGSVVPFA, and VAAAPLPLLVLAVCAALLLLL.

It to B.subtilis ComEC, H.influenzae REC2, and E.coli YcaI.

Its subcellular location is the cell inner membrane. In terms of biological role, essential for natural transformation. Could be a transporter involved in DNA uptake. The chain is Competence protein ComA (comA) from Neisseria gonorrhoeae.